The chain runs to 150 residues: SsrA-binding protein (150 aa).

It belongs to the SmpB family.

Its subcellular location is the cytoplasm. Required for rescue of stalled ribosomes mediated by trans-translation. Binds to transfer-messenger RNA (tmRNA), required for stable association of tmRNA with ribosomes. tmRNA and SmpB together mimic tRNA shape, replacing the anticodon stem-loop with SmpB. tmRNA is encoded by the ssrA gene; the 2 termini fold to resemble tRNA(Ala) and it encodes a 'tag peptide', a short internal open reading frame. During trans-translation Ala-aminoacylated tmRNA acts like a tRNA, entering the A-site of stalled ribosomes, displacing the stalled mRNA. The ribosome then switches to translate the ORF on the tmRNA; the nascent peptide is terminated with the 'tag peptide' encoded by the tmRNA and targeted for degradation. The ribosome is freed to recommence translation, which seems to be the essential function of trans-translation. The protein is SsrA-binding protein of Magnetococcus marinus (strain ATCC BAA-1437 / JCM 17883 / MC-1).